Reading from the N-terminus, the 435-residue chain is Glutamate-1-semialdehyde 2,1-aminomutase (435 aa).

Position 269 is an N6-(pyridoxal phosphate)lysine (Lys-269).

Belongs to the class-III pyridoxal-phosphate-dependent aminotransferase family. HemL subfamily. In terms of assembly, homodimer. Requires pyridoxal 5'-phosphate as cofactor.

The protein localises to the cytoplasm. The enzyme catalyses (S)-4-amino-5-oxopentanoate = 5-aminolevulinate. It functions in the pathway porphyrin-containing compound metabolism; protoporphyrin-IX biosynthesis; 5-aminolevulinate from L-glutamyl-tRNA(Glu): step 2/2. The protein is Glutamate-1-semialdehyde 2,1-aminomutase of Gemmatimonas aurantiaca (strain DSM 14586 / JCM 11422 / NBRC 100505 / T-27).